Reading from the N-terminus, the 1307-residue chain is Cyclic nucleotide-gated channel beta-1 (1307 aa).

6 disordered regions span residues Met1–Ala101, Gln126–Ser178, Leu193–Pro262, Asp320–Cys458, Leu470–Ser625, and Glu648–Glu681. At Met1–Tyr720 the chain is on the cytoplasmic side. Acidic residues predominate over residues Val43–Ala59. Basic and acidic residues predominate over residues Gly165–Asp174. A compositionally biased stretch (acidic residues) spans Gln361–Arg386. Basic and acidic residues predominate over residues Glu387–Lys406. Acidic residues-rich tracts occupy residues Glu407–Pro451 and Leu483–Glu518. Over residues Thr550 to Ser560 the composition is skewed to pro residues. A calmodulin-binding CaM1 region spans residues Ala621 to Arg631. Residues Ile721–Trp742 traverse the membrane as a helical segment. At Ala743–Asn751 the chain is on the extracellular side. The helical transmembrane segment at Ile752–Phe773 threads the bilayer. At Gln774–Asp788 the chain is on the cytoplasmic side. The helical transmembrane segment at Lys789–Cys808 threads the bilayer. Residues Leu809–Leu824 lie on the Extracellular side of the membrane. Residues Leu825 to Phe837 form a helical membrane-spanning segment. Over Glu838–Lys849 the chain is Cytoplasmic. Residues Ala850–Leu872 form a helical membrane-spanning segment. Residues Ala850 to Ala949 are ion conduction pathway. Topologically, residues Tyr873–Ser895 are extracellular. The next 2 helical transmembrane spans lie at Tyr896–Ile922 and Val923–Gly948. The Cytoplasmic portion of the chain corresponds to Ala949 to Glu1307. The segment at Ala952–Gln1028 is C-linker. Residues Leu1026–Leu1130 are cNMP-binding domain. A cyclic nucleotide-binding domain region spans residues Arg1032–Leu1148. Positions 1093, 1094, 1096, 1106, and 1107 each coordinate 3',5'-cyclic GMP. Position 1106 (Arg1106) interacts with 3',5'-cyclic AMP. Residues Gln1212–Gln1218 are calmodulin-binding CaM2. A compositionally biased stretch (low complexity) spans Gln1214–Ala1238. Positions Gln1214–Glu1307 are disordered. Residues Glu1250–Ser1261 show a composition bias toward pro residues.

This sequence belongs to the cyclic nucleotide-gated cation channel (TC 1.A.1.5) family. CNGB1 subfamily. As to quaternary structure, the rod cyclic nucleotide-gated channel is a heterotetramer composed of CNGA1 and CNGB1 subunits with 3:1 stoichiometry. CNGA1:CNGB1 channel binds Ca(2+)-bound CALM1 via CaM1 and CaM2 regions of the CNGB1 subunit; this interaction modulates the affinity of the channel for cNMPs in response to intracellular Ca(2+) levels. In terms of assembly, the olfactory cyclic nucleotide-gated channel is a heterotetramer composed of CNGA2, CNGA4 and CNGB1b subunits with 2:1:1 stoichiometry. Expressed in olfactory sensory cilia (at protein level).

The protein resides in the cell projection. Its subcellular location is the cilium membrane. The enzyme catalyses Ca(2+)(in) = Ca(2+)(out). It carries out the reaction Na(+)(in) = Na(+)(out). It catalyses the reaction K(+)(in) = K(+)(out). The catalysed reaction is NH4(+)(in) = NH4(+)(out). The enzyme catalyses Rb(+)(in) = Rb(+)(out). It carries out the reaction Li(+)(in) = Li(+)(out). It catalyses the reaction Cs(+)(in) = Cs(+)(out). Functionally, pore-forming subunit of the rod cyclic nucleotide-gated channel. Mediates rod photoresponses at dim light converting transient changes in intracellular cGMP levels into electrical signals. In the dark, cGMP levels are high and keep the channel open enabling a steady inward current carried by Na(+) and Ca(2+) ions that leads to membrane depolarization and neurotransmitter release from synaptic terminals. Upon photon absorption cGMP levels decline leading to channel closure and membrane hyperpolarization that ultimately slows neurotransmitter release and signals the presence of light, the end point of the phototransduction cascade. Conducts cGMP- and cAMP-gated ion currents, with permeability for monovalent and divalent cations. The selectivity for Ca(2+) over Na(+) increases with cGMP concentrations, whereas the selectivity among monovalent ions is independent of the cGMP levels. Its function is as follows. Pore-forming subunit of the olfactory cyclic nucleotide-gated channel. Operates in the cilia of olfactory sensory neurons where chemical stimulation of the odorant is converted to an electrical signal. Mediates odorant-induced cAMP-dependent Ca(2+) influx triggering neuron depolarization. The rise of intracellular Ca(2+) levels potentiates the olfactory response by activating Ca(2+)-dependent Cl(-) channels, but it also serves as a negative feedback signal to desensitize the channel for rapid adaptation to odorants. The polypeptide is Cyclic nucleotide-gated channel beta-1 (Rattus norvegicus (Rat)).